The following is a 768-amino-acid chain: MCGSALGLPPAAFVRLRSCRPGPAAFLRAAWVLSLVLGLGRSENSRCASSHAVSCSECLALGPDCGWCVHEDFISGGPRSERCDIVSNLISKGCPVDSIEYPSVHVTIPSENEVNTQVTPGEVSIQLRPGAAANFMLKIHPLKKYPVDLYYLVDVSASMHNNIEKLNSVGNDLSRKMAFFSRDFRLGFGSYVDKTVSPYISIHPERIHNQCSDYNLDCMPPHGYIHVLSLTENITEFERAVHRQKISGNIDTPEGGFDAMLQAAVCESHIGWRKEAKRLLLVMTDQTSHLALDSKLAGIVVPNDGNCHLRNNVYVKSTTMEHPSLGQLSEKLIDNNINVIFAVQGKQFHWYKDLLPLLPGTIAGEIESKAANLNNLVVEAYQKLISEVKVQVESKVPGVYFNVTAICPDGARKLGMEGCSNVTSSDEVLFNVTVTMEKCSVTGGKNYAIIKPIGFNETSKIHIHQNCGCECEASRGGAAKCAEEAPLDSTCPQCQESQCHQEEAQSPSQGCKAHEDQPVCSGRGVCVCGKCLCHKMKLGKVYGKYCEKDDFSCPYHHGSLCAGHGECEAGRCQCFSGWEGDRCQCPSAAAQHCVNSKGQVCSGRGTCVCGRCECSDPRSIGRFCEHCPTCPTACSENWNCVQCLHPHNLSQAILDQCRTSCASMEQPYVEQASECFSSPSYLRIFFIIFIVTFLIGLLKILIIRQVILQWNSSKIKSSSDYRVSASKKDKLILQSVCTRAVTYRREKPEEIKLDISKLNAHETFRCNF.

The N-terminal stretch at 1–42 is a signal peptide; that stretch reads MCGSALGLPPAAFVRLRSCRPGPAAFLRAAWVLSLVLGLGRS. The Extracellular portion of the chain corresponds to 43–683; that stretch reads ENSRCASSHA…ECFSSPSYLR (641 aa). A PSI domain is found at 46 to 95; that stretch reads RCASSHAVSCSECLALGPDCGWCVHEDFISGGPRSERCDIVSNLISKGCP. 25 disulfides stabilise this stretch: cysteine 47–cysteine 65, cysteine 55–cysteine 469, cysteine 58–cysteine 83, cysteine 68–cysteine 94, cysteine 211–cysteine 218, cysteine 266–cysteine 307, cysteine 407–cysteine 419, cysteine 439–cysteine 467, cysteine 471–cysteine 491, cysteine 471–cysteine 494, cysteine 481–cysteine 494, cysteine 499–cysteine 528, cysteine 511–cysteine 526, cysteine 520–cysteine 531, cysteine 533–cysteine 546, cysteine 553–cysteine 567, cysteine 561–cysteine 572, cysteine 574–cysteine 583, cysteine 585–cysteine 609, cysteine 593–cysteine 607, cysteine 601–cysteine 612, cysteine 614–cysteine 624, cysteine 627–cysteine 630, cysteine 634–cysteine 661, and cysteine 640–cysteine 657. One can recognise a VWFA domain in the interval 146-384; sequence PVDLYYLVDV…NLVVEAYQKL (239 aa). Residues aspartate 154 and serine 156 each contribute to the Mg(2+) site. Ca(2+) is bound at residue aspartate 193. Asparagine 233 carries N-linked (GlcNAc...) asparagine glycosylation. Asparagine 249, aspartate 251, proline 253, and glutamate 254 together coordinate Ca(2+). Residue glutamate 254 participates in Mg(2+) binding. Asparagine 402 carries N-linked (GlcNAc...) asparagine glycosylation. 3 N-linked (GlcNAc...) asparagine glycosylation sites follow: asparagine 421, asparagine 431, and asparagine 456. I-EGF domains lie at 471–495, 499–547, 548–584, and 585–625; these read CEAS…PQCQ, CHQE…KYCE, KDDF…DRCQ, and CPSA…RFCE. Asparagine 648 is a glycosylation site (N-linked (GlcNAc...) asparagine). A helical transmembrane segment spans residues 684–703; the sequence is IFFIIFIVTFLIGLLKILII. Topologically, residues 704–768 are cytoplasmic; sequence RQVILQWNSS…NAHETFRCNF (65 aa).

Belongs to the integrin beta chain family. Heterodimer of an alpha and a beta subunit. Beta-8 (ITGB8) associates with alpha-V (ITGAV) to form ITGAV:ITGB8. ITGAV:ITGB8 interacts with TGFB1. In terms of tissue distribution, placenta, kidney, brain, ovary, uterus and in several transformed cells.

The protein localises to the cell membrane. Integrin alpha-V:beta-8 (ITGAV:ITGB8) is a receptor for fibronectin. It recognizes the sequence R-G-D in its ligands. Integrin alpha-V:beta-6 (ITGAV:ITGB6) mediates R-G-D-dependent release of transforming growth factor beta-1 (TGF-beta-1) from regulatory Latency-associated peptide (LAP), thereby playing a key role in TGF-beta-1 activation on the surface of activated regulatory T-cells (Tregs). Required during vasculogenesis. The sequence is that of Integrin beta-8 (ITGB8) from Oryctolagus cuniculus (Rabbit).